The chain runs to 78 residues: U7-lycotoxin-Ls1a (78 aa).

The signal sequence occupies residues Met1–Ala22. Positions Gln23–Gly26 are excised as a propeptide.

Belongs to the neurotoxin 19 (CSTX) family. 07 (U7-Lctx) subfamily. Post-translationally, contains 4 disulfide bonds. In terms of tissue distribution, expressed by the venom gland.

It is found in the secreted. This Lycosa singoriensis (Wolf spider) protein is U7-lycotoxin-Ls1a.